The following is a 72-amino-acid chain: Translational regulator CsrA (72 aa).

This sequence belongs to the CsrA/RsmA family. In terms of assembly, homodimer; the beta-strands of each monomer intercalate to form a hydrophobic core, while the alpha-helices form wings that extend away from the core.

It localises to the cytoplasm. Its function is as follows. A translational regulator that binds mRNA to regulate translation initiation and/or mRNA stability. Usually binds in the 5'-UTR at or near the Shine-Dalgarno sequence preventing ribosome-binding, thus repressing translation. Its main target seems to be the major flagellin gene, while its function is anatagonized by FliW. The polypeptide is Translational regulator CsrA (Agathobacter rectalis (strain ATCC 33656 / DSM 3377 / JCM 17463 / KCTC 5835 / VPI 0990) (Eubacterium rectale)).